Reading from the N-terminus, the 86-residue chain is Neurotoxin LmNaTx1 (86 aa).

The N-terminal stretch at 1 to 18 is a signal peptide; the sequence is MKILIIFVIAITVVGVQS. One can recognise an LCN-type CS-alpha/beta domain in the interval 19-85; the sequence is KDGYPIYSTG…VWTYAENTCG (67 aa). 4 disulfides stabilise this stretch: Cys33/Cys84, Cys37/Cys58, Cys44/Cys65, and Cys48/Cys67. Cys84 bears the Cysteine amide mark.

It belongs to the long (4 C-C) scorpion toxin superfamily. Sodium channel inhibitor family. Beta subfamily. Expressed by the venom gland.

It localises to the secreted. Its function is as follows. Binds voltage-independently at site-4 of sodium channels (Nav) and shift the voltage of activation toward more negative potentials thereby affecting sodium channel activation and promoting spontaneous and repetitive firing. This chain is Neurotoxin LmNaTx1, found in Lychas mucronatus (Chinese swimming scorpion).